The chain runs to 56 residues: UPF0391 membrane protein Bd1438 (56 aa).

Transmembrane regions (helical) follow at residues 4–24 and 33–53; these read AAIAFFIIAIVAYIFGASGVA and ILLFVFLALAIISFVINLVSG.

Belongs to the UPF0391 family.

The protein localises to the cell membrane. The sequence is that of UPF0391 membrane protein Bd1438 from Bdellovibrio bacteriovorus (strain ATCC 15356 / DSM 50701 / NCIMB 9529 / HD100).